Here is a 405-residue protein sequence, read N- to C-terminus: Tryptophan synthase beta chain (405 aa).

The residue at position 95 (K95) is an N6-(pyridoxal phosphate)lysine.

The protein belongs to the TrpB family. As to quaternary structure, tetramer of two alpha and two beta chains. The cofactor is pyridoxal 5'-phosphate.

The enzyme catalyses (1S,2R)-1-C-(indol-3-yl)glycerol 3-phosphate + L-serine = D-glyceraldehyde 3-phosphate + L-tryptophan + H2O. Its pathway is amino-acid biosynthesis; L-tryptophan biosynthesis; L-tryptophan from chorismate: step 5/5. Functionally, the beta subunit is responsible for the synthesis of L-tryptophan from indole and L-serine. The chain is Tryptophan synthase beta chain from Pseudomonas entomophila (strain L48).